Here is a 385-residue protein sequence, read N- to C-terminus: GTP cyclohydrolase-2 (385 aa).

The interval 1-189 is DHBP synthase-like; the sequence is MYADAPSDSA…RDIADYRVHV (189 aa). Residues 190 to 385 form a GTP cyclohydrolase II region; that stretch reads VRTLRRVAEA…TKAERSGHMF (196 aa). A GTP-binding site is contributed by 240–244; the sequence is RLHSE. Positions 245, 256, and 258 each coordinate Zn(2+). GTP is bound by residues glutamine 261, 283-285, and threonine 305; that span reads EGR. Aspartate 317 functions as the Proton acceptor in the catalytic mechanism. Arginine 319 (nucleophile) is an active-site residue. Residues threonine 340 and lysine 345 each contribute to the GTP site.

This sequence in the N-terminal section; belongs to the DHBP synthase family. In the C-terminal section; belongs to the GTP cyclohydrolase II family. Zn(2+) is required as a cofactor.

The catalysed reaction is GTP + 4 H2O = 2,5-diamino-6-hydroxy-4-(5-phosphoribosylamino)-pyrimidine + formate + 2 phosphate + 3 H(+). The protein operates within cofactor biosynthesis; riboflavin biosynthesis; 5-amino-6-(D-ribitylamino)uracil from GTP: step 1/4. Functionally, catalyzes the conversion of GTP to 2,5-diamino-6-ribosylamino-4(3H)-pyrimidinone 5'-phosphate (DARP), formate and pyrophosphate. The sequence is that of GTP cyclohydrolase-2 (ribA) from Azospirillum brasilense.